Reading from the N-terminus, the 114-residue chain is Cyclin-dependent kinase 2-associated protein 1 (114 aa).

Residues 18–57 (AGSVHSPSTSMATSSQYRQLLSDYGPPSLGYTQGTGNSQV) are disordered. Residues 19–24 (GSVHSP) are interaction with CDK2AP2. The segment covering 20–36 (SVHSPSTSMATSSQYRQ) has biased composition (polar residues). Position 45 is a phosphoserine; by IKKE (S45). The segment covering 47 to 57 (GYTQGTGNSQV) has biased composition (polar residues).

It belongs to the CDK2AP family. Homodimer. Component of the nucleosome remodeling and deacetylase (NuRD) repressor complex, composed of core proteins MTA1, MTA2, MTA3, RBBP4, RBBP7, HDAC1, HDAC2, MBD2, MBD3, and peripherally associated proteins CDK2AP1, CDK2AP2, GATAD2A, GATAD2B, CHD3, CHD4 and CHD5. The exact stoichiometry of the NuRD complex is unknown, and some subunits such as MBD2 and MBD3, GATAD2A and GATAD2B, and CHD3, CHD4 and CHD5 define mutually exclusive NuRD complexes. Interacts with monomeric unphosphorylated CDK2. Interacts with CDK2AP2. Interacts with GATAD2A. Interacts with HDAC1. Interacts with HDAC2. Interacts with MBD2. Interacts with MBD3. Interacts with RBBP4. Interacts with RBBP7. Phosphorylated in vitro by IKBKE at Ser-45.

The protein resides in the nucleus. It localises to the chromosome. In terms of biological role, inhibitor of cyclin-dependent kinase CDK2. Also acts as a component of the histone deacetylase NuRD complex which participates in the remodeling of chromatin. This is Cyclin-dependent kinase 2-associated protein 1 (Cdk2ap1) from Mus musculus (Mouse).